We begin with the raw amino-acid sequence, 856 residues long: Mechanosensitive ion channel protein 6 (856 aa).

Disordered regions lie at residues Gly45 to Thr86 and Arg116 to Ala226. Composition is skewed to basic and acidic residues over residues Gln70–Pro85 and Thr129–Arg140. Residues Ser155 to Leu168 show a composition bias toward polar residues. Ser211 is subject to Phosphoserine. Residues Glu217 to Ala226 are compositionally biased toward acidic residues. 4 helical membrane passes run Ile242–Ile262, Leu283–Ile303, Ala323–Glu343, and Ile360–Val380. Ser462 bears the Phosphoserine mark. The next 2 helical transmembrane spans lie at Met615–Thr635 and Ala651–Ile671.

It belongs to the MscS (TC 1.A.23) family.

It is found in the membrane. Functionally, mechanosensitive channel that opens in response to stretch forces in the membrane lipid bilayer. The chain is Mechanosensitive ion channel protein 6 (MSL6) from Arabidopsis thaliana (Mouse-ear cress).